A 521-amino-acid chain; its full sequence is Protein nucleotidyltransferase YdiU (521 aa).

The ATP site is built by G109, G111, R112, K131, D143, G144, R194, and R201. D270 functions as the Proton acceptor in the catalytic mechanism. Mg(2+)-binding residues include N271 and D280. Position 280 (D280) interacts with ATP.

The protein belongs to the SELO family. The cofactor is Mg(2+). It depends on Mn(2+) as a cofactor.

The catalysed reaction is L-seryl-[protein] + ATP = 3-O-(5'-adenylyl)-L-seryl-[protein] + diphosphate. It carries out the reaction L-threonyl-[protein] + ATP = 3-O-(5'-adenylyl)-L-threonyl-[protein] + diphosphate. It catalyses the reaction L-tyrosyl-[protein] + ATP = O-(5'-adenylyl)-L-tyrosyl-[protein] + diphosphate. The enzyme catalyses L-histidyl-[protein] + UTP = N(tele)-(5'-uridylyl)-L-histidyl-[protein] + diphosphate. The catalysed reaction is L-seryl-[protein] + UTP = O-(5'-uridylyl)-L-seryl-[protein] + diphosphate. It carries out the reaction L-tyrosyl-[protein] + UTP = O-(5'-uridylyl)-L-tyrosyl-[protein] + diphosphate. Nucleotidyltransferase involved in the post-translational modification of proteins. It can catalyze the addition of adenosine monophosphate (AMP) or uridine monophosphate (UMP) to a protein, resulting in modifications known as AMPylation and UMPylation. The sequence is that of Protein nucleotidyltransferase YdiU from Burkholderia thailandensis (strain ATCC 700388 / DSM 13276 / CCUG 48851 / CIP 106301 / E264).